The sequence spans 1685 residues: PHD and RING finger domain-containing protein 1 (1685 aa).

Residues 1-82 form a disordered region; it reads MDDDNLDELV…GSEDSEDGIE (82 aa). Residues 41–81 are compositionally biased toward acidic residues; it reads DSEDDTGSEQDDDTDGEETEGLSEEEDPEDRSGSEDSEDGI. The RING-type; degenerate zinc-finger motif lies at 109 to 150; sequence CPICLNAFRDQAVGTPETCAHYFCLDCIIEWSRNANSCPVDR. The PHD-type zinc-finger motif lies at 188 to 238; the sequence is PTFCEVCGRSDREDRLLLCDGCDAGYHMECLDPPLQEVPVDEWFCPECAVP. Disordered stretches follow at residues 333–390, 449–483, 537–590, 606–777, and 809–860; these read PLTP…KLKN, DSNG…VARP, SAKR…GLSC, TPVR…GSSF, and KVQR…LLPS. At threonine 335 the chain carries Phosphothreonine. 2 stretches are compositionally biased toward basic residues: residues 339-364 and 372-387; these read PAKR…RSSV and RAKK…KGRK. Serine 450 and serine 460 each carry phosphoserine. 2 stretches are compositionally biased toward polar residues: residues 606–625 and 637–662; these read TPVR…GNLS and SPRL…NFPS. Positions 671-682 are enriched in basic and acidic residues; sequence QKTDPRRPDFSK. Composition is skewed to polar residues over residues 694 to 709 and 737 to 751; these read SNST…QTVE and SSRG…TSGS. Phosphoserine is present on residues serine 817, serine 848, serine 849, serine 867, serine 870, serine 922, serine 948, serine 984, and serine 1002. Low complexity predominate over residues 835–860; sequence PFDPTGSDSSPPSSSPESLGSGLLPS. Disordered regions lie at residues 892–1229, 1290–1355, and 1369–1390; these read GTEM…VSEV, QLDD…APSD, and TTLS…SGRG. Over residues 922–934 the composition is skewed to acidic residues; the sequence is SDLEQEGLGEIEP. Low complexity predominate over residues 1001-1010; it reads SSRSRSTSSS. 2 stretches are compositionally biased toward basic residues: residues 1011 to 1031 and 1054 to 1064; these read RSRK…RTRS and KRHRAKTKSRR. Basic and acidic residues predominate over residues 1065–1075; the sequence is SSSDRASSQDR. Composition is skewed to basic residues over residues 1089-1102 and 1117-1129; these read GPWG…KSRS and SRRR…GSRS. Basic and acidic residues-rich tracts occupy residues 1130 to 1143 and 1151 to 1165; these read RGRD…LERD and RSRE…MTRS. A phosphoserine mark is found at serine 1135 and serine 1139. Basic residues predominate over residues 1181–1191; sequence RTRRPHSREKH. Over residues 1192–1201 the composition is skewed to basic and acidic residues; it reads PHSPEKKGAV. Serine 1205 is subject to Phosphoserine. Residues 1292-1305 are compositionally biased toward low complexity; that stretch reads DDMSSPPSPESTDS. Phosphoserine is present on residues serine 1372 and serine 1383. Threonine 1416 carries the phosphothreonine modification. Disordered stretches follow at residues 1421–1448, 1466–1501, and 1569–1591; these read EAEA…EGDW, LPPP…VGTL, and LAVP…AEKT. The segment covering 1577–1591 has biased composition (basic and acidic residues); that stretch reads SEERTATPKTAAEKT. A coiled-coil region spans residues 1589 to 1615; sequence EKTKKEEYMKKLHMQERAVEEVKLAIK.

As to quaternary structure, interacts with POLR2A (via the C-terminal domain).

The polypeptide is PHD and RING finger domain-containing protein 1 (Rattus norvegicus (Rat)).